Reading from the N-terminus, the 401-residue chain is 1-deoxy-D-xylulose 5-phosphate reductoisomerase (401 aa).

Residues threonine 10, glycine 11, serine 12, isoleucine 13, glycine 36, arginine 37, asparagine 38, and asparagine 124 each coordinate NADPH. Lysine 125 provides a ligand contact to 1-deoxy-D-xylulose 5-phosphate. Glutamate 126 serves as a coordination point for NADPH. Aspartate 150 contributes to the Mn(2+) binding site. Serine 151, glutamate 152, serine 176, and histidine 199 together coordinate 1-deoxy-D-xylulose 5-phosphate. Glutamate 152 lines the Mn(2+) pocket. Residue glycine 205 coordinates NADPH. Positions 212, 217, 218, and 221 each coordinate 1-deoxy-D-xylulose 5-phosphate. Mn(2+) is bound at residue glutamate 221.

The protein belongs to the DXR family. It depends on Mg(2+) as a cofactor. The cofactor is Mn(2+).

It carries out the reaction 2-C-methyl-D-erythritol 4-phosphate + NADP(+) = 1-deoxy-D-xylulose 5-phosphate + NADPH + H(+). It participates in isoprenoid biosynthesis; isopentenyl diphosphate biosynthesis via DXP pathway; isopentenyl diphosphate from 1-deoxy-D-xylulose 5-phosphate: step 1/6. Functionally, catalyzes the NADPH-dependent rearrangement and reduction of 1-deoxy-D-xylulose-5-phosphate (DXP) to 2-C-methyl-D-erythritol 4-phosphate (MEP). This chain is 1-deoxy-D-xylulose 5-phosphate reductoisomerase, found in Acaryochloris marina (strain MBIC 11017).